The primary structure comprises 236 residues: Class B acid phosphatase (236 aa).

The N-terminal stretch at 1-22 (MKNVMKLSVIALLTAAAVPAMA) is a signal peptide. The Nucleophile role is filled by Asp-67. Positions 67 and 69 each coordinate Mg(2+). Asp-69 functions as the Proton donor in the catalytic mechanism. Residues 136–137 (TG) and Lys-176 contribute to the substrate site. Position 191 (Asp-191) interacts with Mg(2+).

The protein belongs to the class B bacterial acid phosphatase family. In terms of assembly, homotetramer. Mg(2+) serves as cofactor.

The protein resides in the periplasm. It catalyses the reaction a phosphate monoester + H2O = an alcohol + phosphate. Functionally, dephosphorylates several organic phosphate monoesters. Also has a phosphotransferase activity catalyzing the transfer of low-energy phosphate groups from organic phosphate monoesters to free hydroxyl groups of various organic compounds. The chain is Class B acid phosphatase (aphA) from Haemophilus influenzae (strain ATCC 51907 / DSM 11121 / KW20 / Rd).